A 507-amino-acid chain; its full sequence is ATP synthase subunit alpha, chloroplastic (507 aa).

170-177 (GDRQTGKT) is a binding site for ATP.

This sequence belongs to the ATPase alpha/beta chains family. As to quaternary structure, F-type ATPases have 2 components, CF(1) - the catalytic core - and CF(0) - the membrane proton channel. CF(1) has five subunits: alpha(3), beta(3), gamma(1), delta(1), epsilon(1). CF(0) has four main subunits: a, b, b' and c.

It is found in the plastid. Its subcellular location is the chloroplast thylakoid membrane. The catalysed reaction is ATP + H2O + 4 H(+)(in) = ADP + phosphate + 5 H(+)(out). Functionally, produces ATP from ADP in the presence of a proton gradient across the membrane. The alpha chain is a regulatory subunit. The chain is ATP synthase subunit alpha, chloroplastic from Populus alba (White poplar).